The chain runs to 72 residues: Translation initiation factor IF-1 (72 aa).

The S1-like domain occupies 1–72 (MAKEDTLEFP…SKGRINYRFK (72 aa)).

The protein belongs to the IF-1 family. As to quaternary structure, component of the 30S ribosomal translation pre-initiation complex which assembles on the 30S ribosome in the order IF-2 and IF-3, IF-1 and N-formylmethionyl-tRNA(fMet); mRNA recruitment can occur at any time during PIC assembly.

It is found in the cytoplasm. Functionally, one of the essential components for the initiation of protein synthesis. Stabilizes the binding of IF-2 and IF-3 on the 30S subunit to which N-formylmethionyl-tRNA(fMet) subsequently binds. Helps modulate mRNA selection, yielding the 30S pre-initiation complex (PIC). Upon addition of the 50S ribosomal subunit IF-1, IF-2 and IF-3 are released leaving the mature 70S translation initiation complex. The chain is Translation initiation factor IF-1 from Cereibacter sphaeroides (strain ATCC 17029 / ATH 2.4.9) (Rhodobacter sphaeroides).